The primary structure comprises 833 residues: DNA ligase (833 aa).

NAD(+) contacts are provided by residues 35 to 39 (DADYD), 84 to 85 (SL), and Glu115. The active-site N6-AMP-lysine intermediate is the Lys117. Residues Arg138, Glu175, Lys292, and Lys316 each coordinate NAD(+). 4 residues coordinate Zn(2+): Cys410, Cys413, Cys428, and Cys434. In terms of domain architecture, BRCT spans 750 to 833 (LQTGPLDGQT…AFLGDHGQQP (84 aa)).

Belongs to the NAD-dependent DNA ligase family. LigA subfamily. It depends on Mg(2+) as a cofactor. Requires Mn(2+) as cofactor.

The catalysed reaction is NAD(+) + (deoxyribonucleotide)n-3'-hydroxyl + 5'-phospho-(deoxyribonucleotide)m = (deoxyribonucleotide)n+m + AMP + beta-nicotinamide D-nucleotide.. In terms of biological role, DNA ligase that catalyzes the formation of phosphodiester linkages between 5'-phosphoryl and 3'-hydroxyl groups in double-stranded DNA using NAD as a coenzyme and as the energy source for the reaction. It is essential for DNA replication and repair of damaged DNA. The polypeptide is DNA ligase (Xanthomonas euvesicatoria pv. vesicatoria (strain 85-10) (Xanthomonas campestris pv. vesicatoria)).